Here is a 305-residue protein sequence, read N- to C-terminus: MGAQLRVYKRRIQAVTATKKITKAMEMIAASRIVKAQRKVAASKPYATELTRAVTAVATGSNAKHPLTTEVETPTRAAVLLVTSDRGLAGGYSSNAIKAAERLRERLASEGKEVDTYIVGRKGVAYYGFRERKVEDSWTGFTDNPAYSDAKSIAAPLIEAIQKETAEGGVDELHIVFTEFVSMMTQNAVDDRMLPLSLDDVAEESTRKGEILPLFDFEPSAEDVLDALLPRYVESRIYNALLQAAASEHAARRRAMKSATDNAGDLIKSLSRLANAARQAEITQEISEIVGGASALADATAGSDK.

It belongs to the ATPase gamma chain family. As to quaternary structure, F-type ATPases have 2 components, CF(1) - the catalytic core - and CF(0) - the membrane proton channel. CF(1) has five subunits: alpha(3), beta(3), gamma(1), delta(1), epsilon(1). CF(0) has three main subunits: a, b and c.

It localises to the cell membrane. Functionally, produces ATP from ADP in the presence of a proton gradient across the membrane. The gamma chain is believed to be important in regulating ATPase activity and the flow of protons through the CF(0) complex. This Streptomyces griseus subsp. griseus (strain JCM 4626 / CBS 651.72 / NBRC 13350 / KCC S-0626 / ISP 5235) protein is ATP synthase gamma chain.